The sequence spans 352 residues: Holliday junction branch migration complex subunit RuvB (352 aa).

Positions 1–42 are disordered; sequence MAIVSSSAGRADSQPPAAKSRVVDASPLPEEASPAREDGLRP. The large ATPase domain (RuvB-L) stretch occupies residues 13–201; the sequence is SQPPAAKSRV…FGLIQRLEFY (189 aa). The span at 33 to 42 shows a compositional bias: basic and acidic residues; the sequence is SPAREDGLRP. ATP is bound by residues Leu-40, Arg-41, Gly-82, Lys-85, Thr-86, Thr-87, Arg-191, Tyr-201, and Arg-238. Thr-86 is a Mg(2+) binding site. Residues 202–273 form a small ATPAse domain (RuvB-S) region; it reads GLEDLQAIVE…LVDEALTLHR (72 aa). Residues 276–352 form a head domain (RuvB-H) region; the sequence is ARGLDASDRR…RRHLGWPELP (77 aa). Positions 331 and 336 each coordinate DNA.

The protein belongs to the RuvB family. In terms of assembly, homohexamer. Forms an RuvA(8)-RuvB(12)-Holliday junction (HJ) complex. HJ DNA is sandwiched between 2 RuvA tetramers; dsDNA enters through RuvA and exits via RuvB. An RuvB hexamer assembles on each DNA strand where it exits the tetramer. Each RuvB hexamer is contacted by two RuvA subunits (via domain III) on 2 adjacent RuvB subunits; this complex drives branch migration. In the full resolvosome a probable DNA-RuvA(4)-RuvB(12)-RuvC(2) complex forms which resolves the HJ.

It localises to the cytoplasm. It carries out the reaction ATP + H2O = ADP + phosphate + H(+). The RuvA-RuvB-RuvC complex processes Holliday junction (HJ) DNA during genetic recombination and DNA repair, while the RuvA-RuvB complex plays an important role in the rescue of blocked DNA replication forks via replication fork reversal (RFR). RuvA specifically binds to HJ cruciform DNA, conferring on it an open structure. The RuvB hexamer acts as an ATP-dependent pump, pulling dsDNA into and through the RuvAB complex. RuvB forms 2 homohexamers on either side of HJ DNA bound by 1 or 2 RuvA tetramers; 4 subunits per hexamer contact DNA at a time. Coordinated motions by a converter formed by DNA-disengaged RuvB subunits stimulates ATP hydrolysis and nucleotide exchange. Immobilization of the converter enables RuvB to convert the ATP-contained energy into a lever motion, pulling 2 nucleotides of DNA out of the RuvA tetramer per ATP hydrolyzed, thus driving DNA branch migration. The RuvB motors rotate together with the DNA substrate, which together with the progressing nucleotide cycle form the mechanistic basis for DNA recombination by continuous HJ branch migration. Branch migration allows RuvC to scan DNA until it finds its consensus sequence, where it cleaves and resolves cruciform DNA. This chain is Holliday junction branch migration complex subunit RuvB, found in Prochlorococcus marinus (strain MIT 9313).